Here is a 440-residue protein sequence, read N- to C-terminus: Asparagine--tRNA ligase (440 aa).

It belongs to the class-II aminoacyl-tRNA synthetase family. In terms of assembly, homodimer.

It is found in the cytoplasm. The catalysed reaction is tRNA(Asn) + L-asparagine + ATP = L-asparaginyl-tRNA(Asn) + AMP + diphosphate + H(+). This Chloroflexus aurantiacus (strain ATCC 29364 / DSM 637 / Y-400-fl) protein is Asparagine--tRNA ligase.